The sequence spans 496 residues: Angiopoietin-2 (496 aa).

The signal sequence occupies residues 1-18 (MWQLVFFALSCDLVLAAA). N-linked (GlcNAc...) asparagine glycans are attached at residues N89, N119, N133, N151, N240, and N304. The stretch at 130–255 (NLLNQTAEQT…KQQHDLMETV (126 aa)) forms a coiled coil. Residues 275 to 495 (KEEQIIFRDC…ATTMMIRPAD (221 aa)) enclose the Fibrinogen C-terminal domain. A disulfide bridge connects residues C284 and C313. Ca(2+)-binding residues include D429, D431, C433, and C435. Disulfide bonds link C433–C435 and C437–C450.

Interacts with TEK/TIE2, competing for the same binding site as ANGPT1. Interacts with ITGA5. Interacts with SVEP1/polydom. Interacts with THBD; this interaction significantly inhibits the generation of activated PC and TAFIa/CPB2 by the thrombin/thrombomodulin complex.

It is found in the secreted. Its function is as follows. Binds to TEK/TIE2, competing for the ANGPT1 binding site, and modulating ANGPT1 signaling. Can induce tyrosine phosphorylation of TEK/TIE2 in the absence of ANGPT1. In the absence of angiogenic inducers, such as VEGF, ANGPT2-mediated loosening of cell-matrix contacts may induce endothelial cell apoptosis with consequent vascular regression. In concert with VEGF, it may facilitate endothelial cell migration and proliferation, thus serving as a permissive angiogenic signal. Involved in the regulation of lymphangiogenesis. The sequence is that of Angiopoietin-2 (ANGPT2) from Sus scrofa (Pig).